A 199-amino-acid chain; its full sequence is ATP-dependent Clp protease proteolytic subunit (199 aa).

S99 (nucleophile) is an active-site residue. The active site involves H124.

It belongs to the peptidase S14 family. In terms of assembly, fourteen ClpP subunits assemble into 2 heptameric rings which stack back to back to give a disk-like structure with a central cavity, resembling the structure of eukaryotic proteasomes.

Its subcellular location is the cytoplasm. It catalyses the reaction Hydrolysis of proteins to small peptides in the presence of ATP and magnesium. alpha-casein is the usual test substrate. In the absence of ATP, only oligopeptides shorter than five residues are hydrolyzed (such as succinyl-Leu-Tyr-|-NHMec, and Leu-Tyr-Leu-|-Tyr-Trp, in which cleavage of the -Tyr-|-Leu- and -Tyr-|-Trp bonds also occurs).. In terms of biological role, cleaves peptides in various proteins in a process that requires ATP hydrolysis. Has a chymotrypsin-like activity. Plays a major role in the degradation of misfolded proteins. In Moorella thermoacetica (strain ATCC 39073 / JCM 9320), this protein is ATP-dependent Clp protease proteolytic subunit.